The sequence spans 1146 residues: Nucleolar protein 6 (1146 aa).

The disordered stretch occupies residues 1–48 (MGPAPAGEQLRGATGEPEVMEPALEGTGKEGKKASSRKRTLAEPPAKG). The residue at position 56 (serine 56) is a Phosphoserine. A coiled-coil region spans residues 83–114 (LLRLQVEELLKEVRLSEKKKDRIDAFLREVNQ). Phosphoserine is present on residues serine 283, serine 289, and serine 811.

This sequence belongs to the NRAP family. In terms of assembly, part of the small subunit (SSU) processome, composed of more than 70 proteins and the RNA chaperone small nucleolar RNA (snoRNA) U3. Interacts with RRP7A; required for NOL6 localization to nucleolus.

The protein resides in the nucleus. The protein localises to the nucleolus. It is found in the chromosome. Part of the small subunit (SSU) processome, first precursor of the small eukaryotic ribosomal subunit. During the assembly of the SSU processome in the nucleolus, many ribosome biogenesis factors, an RNA chaperone and ribosomal proteins associate with the nascent pre-rRNA and work in concert to generate RNA folding, modifications, rearrangements and cleavage as well as targeted degradation of pre-ribosomal RNA by the RNA exosome. This Homo sapiens (Human) protein is Nucleolar protein 6.